The primary structure comprises 506 residues: Ent-kaurenoic acid oxidase (506 aa).

Residues 11–31 (AWAAGDLWVLAAAVVAGVVLV) form a helical membrane-spanning segment. Cys-451 is a heme binding site.

This sequence belongs to the cytochrome P450 family. Heme serves as cofactor. As to expression, expressed in roots and panicles. Expressed at low levels in vegetative shoot apices, leaf sheaths, leaf blades and stems.

The protein resides in the endoplasmic reticulum membrane. The enzyme catalyses ent-kaur-16-en-19-oate + 3 reduced [NADPH--hemoprotein reductase] + 3 O2 = gibberellin A12 + 3 oxidized [NADPH--hemoprotein reductase] + 4 H2O + 4 H(+). It carries out the reaction ent-kaur-16-en-19-oate + reduced [NADPH--hemoprotein reductase] + O2 = ent-7alpha-hydroxykaur-16-en-19-oate + oxidized [NADPH--hemoprotein reductase] + H2O + H(+). It catalyses the reaction ent-7alpha-hydroxykaur-16-en-19-oate + reduced [NADPH--hemoprotein reductase] + O2 = gibberellin A12 aldehyde + oxidized [NADPH--hemoprotein reductase] + 2 H2O + H(+). The catalysed reaction is gibberellin A12 aldehyde + reduced [NADPH--hemoprotein reductase] + O2 = gibberellin A12 + oxidized [NADPH--hemoprotein reductase] + H2O + 2 H(+). It participates in plant hormone biosynthesis; gibberellin biosynthesis. In terms of biological role, involved in gibberellin (GA) biosynthesis. Catalyzes three successive oxidations of ent-kaurenoic acid giving gibberellin 12 (GA12), a key step in GAs biosynthesis. GAs, which are involved many processes, including stem elongation, play a central role in plant development. Required for pollen germination and elongation. The chain is Ent-kaurenoic acid oxidase from Oryza sativa subsp. japonica (Rice).